We begin with the raw amino-acid sequence, 530 residues long: NMDA receptor synaptonuclear signaling and neuronal migration factor (530 aa).

A lipid anchor (N-myristoyl glycine) is attached at Gly2. The tract at residues 2-233 is necessary and sufficient to elicit dendritic processes and synaptic contacts; sequence GAAASRRRAL…FSFQTATTTM (232 aa). Disordered regions lie at residues 34–67 and 125–197; these read SQSH…APQN and KGRR…GRRK. Over residues 38-48 the composition is skewed to basic and acidic residues; the sequence is PENRNGADHLL. Basic residues predominate over residues 125-137; sequence KGRRQRHPHHHSQ. The segment covering 153–162 has biased composition (polar residues); the sequence is PCQSWAGSRQ. Ser204 is subject to Phosphoserine. A Nuclear localization signal motif is present at residues 247-250; that stretch reads RRKR. The segment at 285–312 is disordered; it reads RSFSRSWSDPTPMKADTSHDSRDSSDLQ. Ser290 and Ser292 each carry phosphoserine. Residues 300–309 are compositionally biased toward basic and acidic residues; that stretch reads DTSHDSRDSS.

It belongs to the NSMF family. As to quaternary structure, interacts with KPNA1; the interaction occurs in a calcium-independent manner after synaptic NMDA receptor stimulation and is required for nuclear import of NSMF but is competed by CABP1. Interacts (via the central NLS-containing motif region) with CABP1 (via EF-hands 1 and 2); the interaction occurs in a calcium-dependent manner after synaptic NMDA receptor stimulation and prevents the nuclear import of NSMF. Cannot be competed by calmodulin. In terms of processing, proteolytically processed after NMDA receptor activation. Cleaved in a calcium-dependent and calpain-sensitive manner. Calpain cleavage is essential for the translocation process from dendrites to the nucleus. Highly expressed in adult and fetal brain. Weakly expressed in heart, liver, spleen, testis, small intestine, skeletal muscle, peripheral white blood cells and kidney.

It localises to the nucleus. The protein resides in the nucleus envelope. The protein localises to the nucleus membrane. Its subcellular location is the nucleus matrix. It is found in the cytoplasm. It localises to the cell cortex. The protein resides in the cytoskeleton. The protein localises to the cell membrane. Its subcellular location is the cell projection. It is found in the dendrite. It localises to the synapse. The protein resides in the synaptosome. The protein localises to the postsynaptic density. Its subcellular location is the membrane. Its function is as follows. Couples NMDA-sensitive glutamate receptor signaling to the nucleus and triggers long-lasting changes in the cytoarchitecture of dendrites and spine synapse processes. Part of the cAMP response element-binding protein (CREB) shut-off signaling pathway. Stimulates outgrowth of olfactory axons and migration of gonadotropin-releasing hormone (GnRH) and luteinizing-hormone-releasing hormone (LHRH) neuronal cells. The polypeptide is NMDA receptor synaptonuclear signaling and neuronal migration factor (NSMF) (Homo sapiens (Human)).